The following is a 1017-amino-acid chain: Probable calcium-transporting ATPase 8, plasma membrane-type (1017 aa).

The Cytoplasmic segment spans residues 1–153 (MEKLDRYLQE…FVWDAFQDMT (153 aa)). The next 2 helical transmembrane spans lie at 154–174 (LIILMVCALLSVAVGLATEGW) and 177–197 (GMYDGLGIILSIFLVVMVTAV). Over 198–228 (SDYKQSLQFKELDNEKKKIFIHVTRDGRRQK) the chain is Cytoplasmic. Helical transmembrane passes span 229–249 (ISIYDLVVGDIVHLSIGDQVP) and 331–351 (VATVIGKIGLVFAILTFLVLL). The Cytoplasmic portion of the chain corresponds to 352–384 (VRFLIDKGMTVGLLKWYSTDALTIVNYFATAVT). Residues 385-405 (IIVVAVPEGLPLAVTLSLAFA) traverse the membrane as a helical segment. The 4-aspartylphosphate intermediate role is filled by Asp-434. Mg(2+) is bound by residues Asp-736 and Asp-740. Residues 803–823 (IVALVINFVSACITGSAPLTA) traverse the membrane as a helical segment. At 824–825 (VQ) the chain is on the cytoplasmic side. The next 2 helical transmembrane spans lie at 826–846 (LLWVNMIMDTLGALALATEPP) and 875–895 (SLYQLFVLGALMFGGESLLNI). Residues 896 to 938 (KGADSKSIINTLIFNSFVFCQVFNEINSREMQKINVFRGIISN) lie on the Cytoplasmic side of the membrane. The next 2 helical transmembrane spans lie at 939-959 (WIFIAVIAATVAFQVVIIEFL) and 973-993 (WLLSVGLGSISLIVGVILKCI). The Cytoplasmic portion of the chain corresponds to 994-1017 (PVGSGETSATPNGYRPLANGPDDI).

The protein belongs to the cation transport ATPase (P-type) (TC 3.A.3) family. Type IIB subfamily.

It is found in the membrane. The catalysed reaction is Ca(2+)(in) + ATP + H2O = Ca(2+)(out) + ADP + phosphate + H(+). Its activity is regulated as follows. Activated by calmodulin. This magnesium-dependent enzyme catalyzes the hydrolysis of ATP coupled with the translocation of calcium from the cytosol out of the cell, into the endoplasmic reticulum, or into organelles. The chain is Probable calcium-transporting ATPase 8, plasma membrane-type from Oryza sativa subsp. japonica (Rice).